A 577-amino-acid polypeptide reads, in one-letter code: Methionine--tRNA ligase, mitochondrial (577 aa).

The 'HIGH' region signature appears at 25–37; it reads PIFYVNAAPHIGH. A 'KMSKS' region motif is present at residues 329–333; that stretch reads KMSKS. Residue lysine 332 participates in ATP binding.

Belongs to the class-I aminoacyl-tRNA synthetase family.

Its subcellular location is the mitochondrion matrix. It catalyses the reaction tRNA(Met) + L-methionine + ATP = L-methionyl-tRNA(Met) + AMP + diphosphate. The chain is Methionine--tRNA ligase, mitochondrial (MSM1) from Candida albicans (Yeast).